We begin with the raw amino-acid sequence, 95 residues long: Translation initiation factor 1A (95 aa).

The 75-residue stretch at 6–80 (SRKNLRMPEE…EKADITWRYE (75 aa)) folds into the S1-like domain.

The protein belongs to the eIF-1A family.

Seems to be required for maximal rate of protein biosynthesis. Enhances ribosome dissociation into subunits and stabilizes the binding of the initiator Met-tRNA(I) to 40 S ribosomal subunits. The chain is Translation initiation factor 1A from Haloarcula marismortui (strain ATCC 43049 / DSM 3752 / JCM 8966 / VKM B-1809) (Halobacterium marismortui).